A 265-amino-acid chain; its full sequence is 1-(5-phosphoribosyl)-5-[(5-phosphoribosylamino)methylideneamino] imidazole-4-carboxamide isomerase (265 aa).

Asp-8 (proton acceptor) is an active-site residue. Asp-139 (proton donor) is an active-site residue.

The protein belongs to the HisA/HisF family.

It is found in the cytoplasm. It catalyses the reaction 1-(5-phospho-beta-D-ribosyl)-5-[(5-phospho-beta-D-ribosylamino)methylideneamino]imidazole-4-carboxamide = 5-[(5-phospho-1-deoxy-D-ribulos-1-ylimino)methylamino]-1-(5-phospho-beta-D-ribosyl)imidazole-4-carboxamide. It participates in amino-acid biosynthesis; L-histidine biosynthesis; L-histidine from 5-phospho-alpha-D-ribose 1-diphosphate: step 4/9. The chain is 1-(5-phosphoribosyl)-5-[(5-phosphoribosylamino)methylideneamino] imidazole-4-carboxamide isomerase from Herminiimonas arsenicoxydans.